The chain runs to 659 residues: Exoribonuclease 2 (659 aa).

Residues 189–532 form the RNB domain; that stretch reads RRDLTALHFV…NHRLIKACLA (344 aa). The 83-residue stretch at 577-659 folds into the S1 motif domain; that stretch reads NPEFRAEVQD…ETRSLIGNLV (83 aa).

It belongs to the RNR ribonuclease family. RNase II subfamily.

The protein localises to the cytoplasm. It catalyses the reaction Exonucleolytic cleavage in the 3'- to 5'-direction to yield nucleoside 5'-phosphates.. In terms of biological role, involved in mRNA degradation. Hydrolyzes single-stranded polyribonucleotides processively in the 3' to 5' direction. The polypeptide is Exoribonuclease 2 (Mannheimia succiniciproducens (strain KCTC 0769BP / MBEL55E)).